Reading from the N-terminus, the 530-residue chain is Glucose-6-phosphate isomerase (530 aa).

Glu356 serves as the catalytic Proton donor. Catalysis depends on residues His387 and Lys502.

The protein belongs to the GPI family.

The protein localises to the cytoplasm. The catalysed reaction is alpha-D-glucose 6-phosphate = beta-D-fructose 6-phosphate. The protein operates within carbohydrate biosynthesis; gluconeogenesis. It functions in the pathway carbohydrate degradation; glycolysis; D-glyceraldehyde 3-phosphate and glycerone phosphate from D-glucose: step 2/4. Catalyzes the reversible isomerization of glucose-6-phosphate to fructose-6-phosphate. In Borreliella burgdorferi (strain ATCC 35210 / DSM 4680 / CIP 102532 / B31) (Borrelia burgdorferi), this protein is Glucose-6-phosphate isomerase.